The sequence spans 315 residues: L-lactate dehydrogenase (315 aa).

NAD(+) is bound by residues valine 14, aspartate 35, and tyrosine 66. Substrate is bound by residues glutamine 83, arginine 89, and 121-124 (NPVD). Residues 119–121 (VAN) and serine 144 contribute to the NAD(+) site. Residue 149–152 (DTAR) coordinates substrate. Histidine 176 functions as the Proton acceptor in the catalytic mechanism. Position 221 is a phosphotyrosine (tyrosine 221). Position 230 (threonine 230) interacts with substrate.

The protein belongs to the LDH/MDH superfamily. LDH family. In terms of assembly, homotetramer.

Its subcellular location is the cytoplasm. It carries out the reaction (S)-lactate + NAD(+) = pyruvate + NADH + H(+). The protein operates within fermentation; pyruvate fermentation to lactate; (S)-lactate from pyruvate: step 1/1. In terms of biological role, catalyzes the conversion of lactate to pyruvate. The chain is L-lactate dehydrogenase from Mesomycoplasma hyopneumoniae (strain 232) (Mycoplasma hyopneumoniae).